The sequence spans 183 residues: MGEVVTKSGGAVHTGGQPLEVSKDGLRFFPGAGAVIGPLNALVNWGRAGSIWPVTFGLACCAIEMMATGAAHHDLDRFGIIFRASPRQADCMVVAGTLSKKMAPVLRRVYDQMPEPRYVLAMGSCACSGGLFQSYAVTQGVDQVVPVDVYVPGCPPRPEALFDGFIRLQEIINKEQMRWSPWR.

[4Fe-4S] cluster-binding residues include Cys-60, Cys-61, Cys-125, and Cys-154.

It belongs to the complex I 20 kDa subunit family. In terms of assembly, NDH-1 is composed of 14 different subunits. Subunits NuoB, C, D, E, F, and G constitute the peripheral sector of the complex. Requires [4Fe-4S] cluster as cofactor.

It localises to the cell inner membrane. The enzyme catalyses a quinone + NADH + 5 H(+)(in) = a quinol + NAD(+) + 4 H(+)(out). Its function is as follows. NDH-1 shuttles electrons from NADH, via FMN and iron-sulfur (Fe-S) centers, to quinones in the respiratory chain. The immediate electron acceptor for the enzyme in this species is believed to be ubiquinone. Couples the redox reaction to proton translocation (for every two electrons transferred, four hydrogen ions are translocated across the cytoplasmic membrane), and thus conserves the redox energy in a proton gradient. The protein is NADH-quinone oxidoreductase subunit B of Desulfovibrio desulfuricans (strain ATCC 27774 / DSM 6949 / MB).